Reading from the N-terminus, the 87-residue chain is Large ribosomal subunit protein bL27 (87 aa).

Belongs to the bacterial ribosomal protein bL27 family.

The protein is Large ribosomal subunit protein bL27 of Dichelobacter nodosus (strain VCS1703A).